Consider the following 429-residue polypeptide: Citrate synthase, chromosomal (429 aa).

Active-site residues include H306 and D364.

It belongs to the citrate synthase family.

The enzyme catalyses oxaloacetate + acetyl-CoA + H2O = citrate + CoA + H(+). The protein operates within carbohydrate metabolism; tricarboxylic acid cycle; isocitrate from oxaloacetate: step 1/2. The protein is Citrate synthase, chromosomal (ccsA) of Rhizobium tropici.